Consider the following 160-residue polypeptide: UPF0178 protein BB1267 (160 aa).

The protein belongs to the UPF0178 family.

The protein is UPF0178 protein BB1267 of Bordetella bronchiseptica (strain ATCC BAA-588 / NCTC 13252 / RB50) (Alcaligenes bronchisepticus).